The primary structure comprises 783 residues: Cation/H(+) antiporter 10 (783 aa).

A run of 12 helical transmembrane segments spans residues 31–51 (VVFGYSLPLLEIQIILIFFCI), 61–81 (IGISQIASYMIAGIVLGPQLF), 100–120 (IAALRCISVFGTLMFTFLMTV), 135–155 (VVIGIVSFFAPLFGLGFQNFF), 175–195 (AIVITQSSILLPSTTYILLEL), 206–226 (ALSACVINDILGIFSMIVASI), 244–264 (AVIIFFLVVFLVFKPMVQWVI), 276–295 (MYIHAVIITALASAAYFVFF), 300–322 (ILGPLMIGIIIPEGPPLGSALEA), 356–376 (IFFNIFLTFLILVIKLVACLA), 389–409 (LAVSFILSYKSFADFVLYEAV), and 418–438 (ATYSFLILYSLLNAGIVPTVL).

The protein belongs to the monovalent cation:proton antiporter 2 (CPA2) transporter (TC 2.A.37) family. CHX (TC 2.A.37.4) subfamily. As to expression, specifically expressed in pollen.

Its subcellular location is the membrane. In terms of biological role, may operate as a cation/H(+) antiporter. The chain is Cation/H(+) antiporter 10 (CHX10) from Arabidopsis thaliana (Mouse-ear cress).